The primary structure comprises 45 residues: Parabutoporin (45 aa).

Monomer and homodimer. As to expression, expressed by the venom gland.

It localises to the secreted. Its subcellular location is the target cell membrane. In terms of biological role, at high concentrations, acts as a pore former in cellular membranes and causes the leakage of the cells. At submicromolar concentrations, degranulates granulocytes and has a weak hemolytic activity against human red blood cells. Also strongly inhibits the production of superoxide anions. Has a strong antibacterial activity against Gram-negative bacteria but is less active against Gram-positive bacteria. Also has antifungal activity. Induces reversible G-protein dependent Ca(2+) release from intracellular stores and increase Ca(2+) influx in HL-60 cells. Induces the activation of the Rac pathway in granulocytes. Synergistically enhances the excitatory effects of short and long chain ion-channel-specific neurotoxins by interaction with the neuronal membranes. The chain is Parabutoporin from Parabuthus schlechteri (Scorpion).